Here is a 145-residue protein sequence, read N- to C-terminus: Superoxide dismutase [Mn/Fe] (145 aa).

Residues H10 and H64 each coordinate Fe(3+). The Mn(2+) site is built by H10 and H64. The tract at residues 126–145 (TSTANQDTPISEGKKPILGL) is disordered.

The protein belongs to the iron/manganese superoxide dismutase family. Mn(2+) serves as cofactor. The cofactor is Fe(3+).

It carries out the reaction 2 superoxide + 2 H(+) = H2O2 + O2. Destroys superoxide anion radicals which are normally produced within the cells and which are toxic to biological systems. Catalyzes the dismutation of superoxide anion radicals into O2 and H2O2 by successive reduction and oxidation of the transition metal ion at the active site. This is Superoxide dismutase [Mn/Fe] (sodA) from Streptococcus oralis.